We begin with the raw amino-acid sequence, 222 residues long: Global nitrogen regulator (222 aa).

6–128 (NSLLTMFREL…NVMLQGLSSR (123 aa)) is an a nucleoside 3',5'-cyclic phosphate binding site. An HTH crp-type domain is found at 142–215 (RDMGSRLVSF…KKRITVFNPV (74 aa)). A DNA-binding region (H-T-H motif) is located at residues 175–194 (HQAIAEAIGSTRVTVTRLLG).

Functionally, required for full expression of proteins subject to ammonium repression. Transcriptional activator of genes subject to nitrogen control. The protein is Global nitrogen regulator (ntcA) of Synechococcus elongatus (strain ATCC 33912 / PCC 7942 / FACHB-805) (Anacystis nidulans R2).